The chain runs to 299 residues: MKTNSEELTVFVQVVESGSFSRAAEQLAMANSAVSRIVKRLEEKLGVNLLNRTTRQLSLTEEGAQYFRRAQRILQEMAAAETEMLAVHEIPQGVLSVDSAMPMVLHLLAPLAAKFNERYPHIRLSLVSSEGYINLIERKVDIALRAGELDDSGLRARHLFDSRFRVIASPEYLAKHGTPQSTEELAGHQCLGFTEPGSLNTWAVLDAQGNPYKISPHFTASSGEILRSLCLSGCGIVCLSDFLVDNDIAEGKLIPLLAEQTSDKTHPFNAVYYSDKAVNLRLRVFLDFLVEELGNNLCG.

One can recognise an HTH lysR-type domain in the interval 1–60; the sequence is MKTNSEELTVFVQVVESGSFSRAAEQLAMANSAVSRIVKRLEEKLGVNLLNRTTRQLSLT. Positions 20 to 39 form a DNA-binding region, H-T-H motif; the sequence is FSRAAEQLAMANSAVSRIVK.

This sequence belongs to the LysR transcriptional regulatory family. Forms oligomers. Forms an octomeric ring-like structure in solution. May form hexadecamers when bound to target DNA.

With respect to regulation, activation and repression activities are enhanced by the addition of alpha-methylene-gamma-butyrolactone (MBL), an inducer of NADPH:quinone oxidoreductase. Regulatory protein that activates transcription of mdaB, encoding a NADPH:quinone oxidoreductase, and represses its own transcription. Under the same experimental conditions, no regulation of transcription of pilus and capsule genes is detected. The sequence is that of HTH-type transcriptional regulator CrgA from Neisseria meningitidis serogroup B (strain ATCC BAA-335 / MC58).